The sequence spans 52 residues: Large ribosomal subunit protein bL32c (52 aa).

It belongs to the bacterial ribosomal protein bL32 family.

The protein localises to the plastid. It is found in the chloroplast. The sequence is that of Large ribosomal subunit protein bL32c from Arabis hirsuta (Hairy rock-cress).